The following is a 243-amino-acid chain: Orotidine 5'-phosphate decarboxylase (243 aa).

Substrate is bound by residues Asp18, Lys39, Asp66 to Thr75, Thr130, Arg192, Gln201, Gly221, and Arg222. Catalysis depends on Lys68, which acts as the Proton donor.

Belongs to the OMP decarboxylase family. Type 1 subfamily. As to quaternary structure, homodimer.

It carries out the reaction orotidine 5'-phosphate + H(+) = UMP + CO2. The protein operates within pyrimidine metabolism; UMP biosynthesis via de novo pathway; UMP from orotate: step 2/2. In terms of biological role, catalyzes the decarboxylation of orotidine 5'-monophosphate (OMP) to uridine 5'-monophosphate (UMP). The chain is Orotidine 5'-phosphate decarboxylase from Synechococcus sp. (strain WH7803).